The sequence spans 299 residues: Class II hydrophobin C (299 aa).

The N-terminal stretch at 1–17 is a signal peptide; that stretch reads MKFLTVAAAIFASTSLA. Asn-39, Asn-78, and Asn-91 each carry an N-linked (GlcNAc...) asparagine glycan. 4 disulfide bridges follow: Cys-232–Cys-281, Cys-242–Cys-272, Cys-243–Cys-255, and Cys-282–Cys-293.

The protein belongs to the cerato-ulmin hydrophobin family.

The protein resides in the secreted. It localises to the cell wall. The protein localises to the vacuole. It is found in the cytoplasmic vesicle. Its function is as follows. Aerial growth, conidiation, and dispersal of filamentous fungi in the environment rely upon a capability of their secreting small amphipathic proteins called hydrophobins (HPBs) with low sequence identity. Class I can self-assemble into an outermost layer of rodlet bundles on aerial cell surfaces, conferring cellular hydrophobicity that supports fungal growth, development and dispersal; whereas Class II form highly ordered films at water-air interfaces through intermolecular interactions but contribute nothing to the rodlet structure. Hyd2C contributes to certain cell wall-related features, such as hydrophobicity but is not involved in cell wall-related events during fungal proliferation in host hemocoel. Does not contribute to conidial hydrophobicity. Involved actively in the asexual development. The protein is Class II hydrophobin C of Beauveria bassiana (strain ARSEF 2860) (White muscardine disease fungus).